The following is a 550-amino-acid chain: Chaperonin GroEL 1 (550 aa).

ATP is bound by residues 30-33 (TLGP), Lys51, 87-91 (DGTTT), Gly415, and Asp496.

Belongs to the chaperonin (HSP60) family. Forms a cylinder of 14 subunits composed of two heptameric rings stacked back-to-back. Interacts with the co-chaperonin GroES.

The protein resides in the cytoplasm. The enzyme catalyses ATP + H2O + a folded polypeptide = ADP + phosphate + an unfolded polypeptide.. Functionally, together with its co-chaperonin GroES, plays an essential role in assisting protein folding. The GroEL-GroES system forms a nano-cage that allows encapsulation of the non-native substrate proteins and provides a physical environment optimized to promote and accelerate protein folding. This is Chaperonin GroEL 1 from Rhodopseudomonas palustris (strain HaA2).